The primary structure comprises 321 residues: Major immediate early protein (321 aa).

The segment at 86–139 (CSVCLETYSQQSNDTCPFLIPTTCDHGFCFKCVINLQSNAMNIPHSTVCCPLCN) adopts an RING-type zinc-finger fold. The segment at 228 to 249 (LIEENTRLNEQIQELQHQVRTL) is leucine-zipper.

It is found in the host nucleus. In terms of biological role, plays some regulatory role in both viral DNA replication and transcriptional transactivation. The chain is Major immediate early protein (PE38) from Lepidoptera (butterflies and moths).